Reading from the N-terminus, the 227-residue chain is PKHD-type hydroxylase Neut_0373 (227 aa).

The Fe2OG dioxygenase domain occupies 78 to 179; sequence KIMPPFFNRY…RIACFMFIQS (102 aa). The Fe cation site is built by His97, Asp99, and His160. Arg170 lines the 2-oxoglutarate pocket.

It depends on Fe(2+) as a cofactor. Requires L-ascorbate as cofactor.

The chain is PKHD-type hydroxylase Neut_0373 from Nitrosomonas eutropha (strain DSM 101675 / C91 / Nm57).